The following is a 257-amino-acid chain: Ribonuclease HII (257 aa).

One can recognise an RNase H type-2 domain in the interval threonine 72 to lysine 257. Aspartate 78, glutamate 79, and aspartate 170 together coordinate a divalent metal cation.

This sequence belongs to the RNase HII family. Mn(2+) is required as a cofactor. It depends on Mg(2+) as a cofactor.

It is found in the cytoplasm. The catalysed reaction is Endonucleolytic cleavage to 5'-phosphomonoester.. In terms of biological role, endonuclease that specifically degrades the RNA of RNA-DNA hybrids. This chain is Ribonuclease HII, found in Bacillus mycoides (strain KBAB4) (Bacillus weihenstephanensis).